Reading from the N-terminus, the 430-residue chain is Adenylosuccinate synthetase (430 aa).

GTP contacts are provided by residues 11 to 17 (GDEGKGK) and 39 to 41 (GHS). Catalysis depends on Asp-12, which acts as the Proton acceptor. Residues Asp-12 and Gly-39 each contribute to the Mg(2+) site. Residues 12–15 (DEGK), 37–40 (NAGH), Thr-129, Arg-143, Asn-221, Thr-236, and Arg-300 contribute to the IMP site. His-40 (proton donor) is an active-site residue. 296–302 (VSTGRKR) lines the substrate pocket. Residues Arg-302, 328–330 (KLD), and 412–414 (GTG) each bind GTP.

It belongs to the adenylosuccinate synthetase family. Homodimer. Mg(2+) is required as a cofactor.

The protein localises to the cytoplasm. It catalyses the reaction IMP + L-aspartate + GTP = N(6)-(1,2-dicarboxyethyl)-AMP + GDP + phosphate + 2 H(+). It functions in the pathway purine metabolism; AMP biosynthesis via de novo pathway; AMP from IMP: step 1/2. In terms of biological role, plays an important role in the de novo pathway and in the salvage pathway of purine nucleotide biosynthesis. Catalyzes the first committed step in the biosynthesis of AMP from IMP. The protein is Adenylosuccinate synthetase of Sordaria macrospora (strain ATCC MYA-333 / DSM 997 / K(L3346) / K-hell).